We begin with the raw amino-acid sequence, 102 residues long: Small ribosomal subunit protein uS10 (102 aa).

The tract at residues 33–59 (RMSGPIPLPTKRIRITTRKSPDGEGSA) is disordered.

Belongs to the universal ribosomal protein uS10 family. As to quaternary structure, part of the 30S ribosomal subunit.

Functionally, involved in the binding of tRNA to the ribosomes. The sequence is that of Small ribosomal subunit protein uS10 from Pyrococcus furiosus (strain ATCC 43587 / DSM 3638 / JCM 8422 / Vc1).